Reading from the N-terminus, the 765-residue chain is 5-methyltetrahydropteroyltriglutamate--homocysteine methyltransferase (765 aa).

Residues 18 to 21 (REWK) and K114 contribute to the 5-methyltetrahydropteroyltri-L-glutamate site. Residues 437–439 (IGS) and E490 contribute to the L-homocysteine site. Residues 437 to 439 (IGS) and E490 contribute to the L-methionine site. W567 contacts 5-methyltetrahydropteroyltri-L-glutamate. D605 provides a ligand contact to L-homocysteine. Residue D605 coordinates L-methionine. E611 serves as a coordination point for 5-methyltetrahydropteroyltri-L-glutamate. Zn(2+) contacts are provided by H647, C649, and E671. H700 (proton donor) is an active-site residue. C732 provides a ligand contact to Zn(2+).

It belongs to the vitamin-B12 independent methionine synthase family. Zn(2+) serves as cofactor.

The enzyme catalyses 5-methyltetrahydropteroyltri-L-glutamate + L-homocysteine = tetrahydropteroyltri-L-glutamate + L-methionine. The protein operates within amino-acid biosynthesis; L-methionine biosynthesis via de novo pathway; L-methionine from L-homocysteine (MetE route): step 1/1. Catalyzes the transfer of a methyl group from 5-methyltetrahydrofolate to homocysteine resulting in methionine formation. This Listeria innocua serovar 6a (strain ATCC BAA-680 / CLIP 11262) protein is 5-methyltetrahydropteroyltriglutamate--homocysteine methyltransferase.